The following is a 93-amino-acid chain: Large ribosomal subunit protein uL23cz/uL23cy (93 aa).

The protein belongs to the universal ribosomal protein uL23 family. As to quaternary structure, part of the 50S ribosomal subunit.

It localises to the plastid. Its subcellular location is the chloroplast. In terms of biological role, binds to 23S rRNA. The chain is Large ribosomal subunit protein uL23cz/uL23cy (rpl23-A) from Cucumis sativus (Cucumber).